The sequence spans 233 residues: 2-C-methyl-D-erythritol 4-phosphate cytidylyltransferase (233 aa).

The protein belongs to the IspD/TarI cytidylyltransferase family. IspD subfamily.

It carries out the reaction 2-C-methyl-D-erythritol 4-phosphate + CTP + H(+) = 4-CDP-2-C-methyl-D-erythritol + diphosphate. It participates in isoprenoid biosynthesis; isopentenyl diphosphate biosynthesis via DXP pathway; isopentenyl diphosphate from 1-deoxy-D-xylulose 5-phosphate: step 2/6. Functionally, catalyzes the formation of 4-diphosphocytidyl-2-C-methyl-D-erythritol from CTP and 2-C-methyl-D-erythritol 4-phosphate (MEP). The protein is 2-C-methyl-D-erythritol 4-phosphate cytidylyltransferase of Lachnoclostridium phytofermentans (strain ATCC 700394 / DSM 18823 / ISDg) (Clostridium phytofermentans).